We begin with the raw amino-acid sequence, 330 residues long: MSIIVTGAAGFIGSNLLQALNQRGETDIIAVDDLTDGEQFRNLADADIADYLDQNDFIERYARGDFGPVRALFHQGACASTLESNGRYMMENNYRYSCRLLEASLELGVPFLYASSAAVYGAGRTFREARRYERPLNVYGYSKFLFDQRVRRALPQARSQVVGLRYFNVYGPREGHKGRMASVAYHCYQQLRRDGRVVLFGEHDGFPAGGHLRDFVAVEDVARVNLHFLDHPQRSGIFNLGSGRARSFNEVALAVINSVRASADQPPLVLAQALESGLLGYREFPEALRARYQSHTCADLELLREAGYRDDFLSLEEGVGGYCRWLARSA.

Residues 11 to 12 (FI), 32 to 33 (DD), glutamine 39, glutamine 54, 75 to 79 (QGACA), and asparagine 92 contribute to the NADP(+) site. The active-site Proton acceptor is the tyrosine 139. Lysine 143 is a binding site for NADP(+). Position 168 (asparagine 168) interacts with substrate. NADP(+) contacts are provided by valine 169 and lysine 177. The active-site Proton acceptor is the lysine 177. Substrate contacts are provided by residues arginine 179, histidine 186, 200–203 (FGEH), arginine 213, and tyrosine 292.

The protein belongs to the NAD(P)-dependent epimerase/dehydratase family. HldD subfamily. Homopentamer. Requires NADP(+) as cofactor.

The enzyme catalyses ADP-D-glycero-beta-D-manno-heptose = ADP-L-glycero-beta-D-manno-heptose. It participates in nucleotide-sugar biosynthesis; ADP-L-glycero-beta-D-manno-heptose biosynthesis; ADP-L-glycero-beta-D-manno-heptose from D-glycero-beta-D-manno-heptose 7-phosphate: step 4/4. Catalyzes the interconversion between ADP-D-glycero-beta-D-manno-heptose and ADP-L-glycero-beta-D-manno-heptose via an epimerization at carbon 6 of the heptose. This chain is ADP-L-glycero-D-manno-heptose-6-epimerase, found in Pseudomonas paraeruginosa (strain DSM 24068 / PA7) (Pseudomonas aeruginosa (strain PA7)).